The following is a 68-amino-acid chain: Large ribosomal subunit protein bL35 (68 aa).

It belongs to the bacterial ribosomal protein bL35 family.

The sequence is that of Large ribosomal subunit protein bL35 from Rickettsia conorii (strain ATCC VR-613 / Malish 7).